The primary structure comprises 408 residues: GTPase Obg (408 aa).

An Obg domain is found at 1–159; that stretch reads MKFVDEVSIR…RDLKMEMKVL (159 aa). The tract at residues 127 to 148 is disordered; it reads NTRFKSSTNRAPRQTTPGKPGE. Residues 129-143 show a composition bias toward polar residues; that stretch reads RFKSSTNRAPRQTTP. The OBG-type G domain maps to 160–333; it reads ADVGLLGLPN…LSHDLMRYLE (174 aa). GTP-binding positions include 166-173, 191-195, 213-216, 283-286, and 314-316; these read GLPNAGKS, FTTLV, DIPG, NKAD, and SAI. 2 residues coordinate Mg(2+): Ser-173 and Thr-193. Residues 385–401 show a composition bias toward acidic residues; sequence GDDDGWDDDFEDDEDGP. The disordered stretch occupies residues 385-408; the sequence is GDDDGWDDDFEDDEDGPEIIYVRD.

The protein belongs to the TRAFAC class OBG-HflX-like GTPase superfamily. OBG GTPase family. As to quaternary structure, monomer. Mg(2+) serves as cofactor.

It is found in the cytoplasm. Functionally, an essential GTPase which binds GTP, GDP and possibly (p)ppGpp with moderate affinity, with high nucleotide exchange rates and a fairly low GTP hydrolysis rate. Plays a role in control of the cell cycle, stress response, ribosome biogenesis and in those bacteria that undergo differentiation, in morphogenesis control. This chain is GTPase Obg, found in Pseudomonas putida (strain ATCC 700007 / DSM 6899 / JCM 31910 / BCRC 17059 / LMG 24140 / F1).